The primary structure comprises 250 residues: 5'-nucleotidase SurE (250 aa).

A divalent metal cation contacts are provided by Asp-8, Asp-9, Ser-39, and Asn-95.

The protein belongs to the SurE nucleotidase family. A divalent metal cation is required as a cofactor.

The protein localises to the cytoplasm. It catalyses the reaction a ribonucleoside 5'-phosphate + H2O = a ribonucleoside + phosphate. Functionally, nucleotidase that shows phosphatase activity on nucleoside 5'-monophosphates. In Cupriavidus pinatubonensis (strain JMP 134 / LMG 1197) (Cupriavidus necator (strain JMP 134)), this protein is 5'-nucleotidase SurE.